The sequence spans 481 residues: UDP-N-acetylmuramoyl-L-alanyl-D-glutamate--L-lysine ligase (481 aa).

Ser42 contributes to the UDP-N-acetyl-alpha-D-muramoyl-L-alanyl-D-glutamate binding site. Residue 118 to 124 participates in ATP binding; that stretch reads GTKGKTT. UDP-N-acetyl-alpha-D-muramoyl-L-alanyl-D-glutamate is bound by residues Asn158, 160–161, Ser187, and Arg195; that span reads TT. Position 229 is an N6-carboxylysine (Lys229). Residues 404–407 carry the L-lysine recognition motif motif; the sequence is DDPN.

It belongs to the MurCDEF family. MurE subfamily. Post-translationally, carboxylation is probably crucial for Mg(2+) binding and, consequently, for the gamma-phosphate positioning of ATP.

It localises to the cytoplasm. It carries out the reaction UDP-N-acetyl-alpha-D-muramoyl-L-alanyl-D-glutamate + L-lysine + ATP = UDP-N-acetyl-alpha-D-muramoyl-L-alanyl-gamma-D-glutamyl-L-lysine + ADP + phosphate + H(+). It participates in cell wall biogenesis; peptidoglycan biosynthesis. Its function is as follows. Catalyzes the addition of L-lysine to the nucleotide precursor UDP-N-acetylmuramoyl-L-alanyl-D-glutamate (UMAG) in the biosynthesis of bacterial cell-wall peptidoglycan. The chain is UDP-N-acetylmuramoyl-L-alanyl-D-glutamate--L-lysine ligase from Streptococcus thermophilus (strain ATCC BAA-491 / LMD-9).